Here is a 348-residue protein sequence, read N- to C-terminus: MSDDKSKALAAALAQIEKSFGKGAIMKMDGSQQEENLEVISTGSLGLDLALGVGGLPRGRIVEIFGPESSGKTTLCLEAVAQCQKNGGVCAFVDAEHAFDPVYARKLGVKVEELYLSQPDTGEQALEICDTLVRSGGIDMVVVDSVAALVPKAEIEGDMGDSHVGLQARLMSQALRKLTGHIKKTNTLVVFINQIRMKIGVMFGSPETTTGGNALKFYSSVRLDIRRTGSIKKGEEVLGNETRVKVIKNKVAPPFRQAEFDILYGEGISWEGELIDIGVKNDIINKSGAWYSYNGAKIGQGKDNVRVWLKENPEVADEIDAKIRALNGVEMHITEGTQDETDGERPEE.

An ATP-binding site is contributed by 66-73; the sequence is GPESSGKT.

Belongs to the RecA family.

Its subcellular location is the cytoplasm. Functionally, can catalyze the hydrolysis of ATP in the presence of single-stranded DNA, the ATP-dependent uptake of single-stranded DNA by duplex DNA, and the ATP-dependent hybridization of homologous single-stranded DNAs. It interacts with LexA causing its activation and leading to its autocatalytic cleavage. This chain is Protein RecA, found in Neisseria meningitidis serogroup A / serotype 4A (strain DSM 15465 / Z2491).